Here is an 852-residue protein sequence, read N- to C-terminus: Envelope glycoprotein gp160 (852 aa).

The signal sequence occupies residues 1–24; the sequence is MAHVNNYLLVTLLLISIYGYMGKN. Residues 25-677 lie on the Extracellular side of the membrane; the sequence is FVTVFYGIPA…FTSWMAYIRL (653 aa). A glycan (N-linked (GlcNAc...) asparagine; by host) is linked at Asn-37. An intrachain disulfide couples Cys-44 to Cys-57. 11 N-linked (GlcNAc...) asparagine; by host glycosylation sites follow: Asn-70, Asn-114, Asn-148, Asn-195, Asn-205, Asn-237, Asn-247, Asn-270, Asn-276, Asn-287, and Asn-298. 4 cysteine pairs are disulfide-bonded: Cys-101–Cys-213, Cys-108–Cys-204, Cys-113–Cys-162, and Cys-236–Cys-248. Residues 113–161 form a V1 region; the sequence is CNKTWSSASKETTTSSASLRSSTQTLLNEDSKCIQNDSCAGIGLEEMID. The segment at 162 to 204 is V2; sequence CQFKMTGLKRDESKQYKDTWYKQDLVCEKGTRSNESKCYIKTC. Residues 303–335 are V3; it reads CKRPGNKMVVPIRTVSGILFHSQPINKRPKQAW. A disulfide bond links Cys-303 and Cys-336. N-linked (GlcNAc...) asparagine; by host glycans are attached at residues Asn-341, Asn-364, Asn-396, Asn-406, Asn-445, Asn-461, and Asn-464. Intrachain disulfides connect Cys-388-Cys-444 and Cys-395-Cys-417. Residues 395-417 are V4; that stretch reads CNMTFFLNWVENRTGLKRNYASC. Residues 461–467 form a V5 region; the sequence is NLTNITV. The segment at 510–530 is fusion peptide; sequence GVLVLGFLGFLATAGSAMGAA. Positions 573–589 are immunosuppression; it reads LQARVTAIEKYLKDQAQ. Asn-609, Asn-618, and Asn-634 each carry an N-linked (GlcNAc...) asparagine; by host glycan. Residues 622 to 648 adopt a coiled-coil conformation; the sequence is QQWERQVRFLDANITKLLEEAQIQQEK. The MPER; binding to GalCer stretch occupies residues 655–676; sequence KLNQWDIFSNWFDFTSWMAYIR. A helical transmembrane segment spans residues 678–698; it reads GLYIVIGIVVLRIAIYIIQML. Topologically, residues 699–852 are cytoplasmic; sequence ARLRKGYRPV…IRQGAELALL (154 aa). Positions 705 to 708 match the YXXV motif; contains endocytosis signal motif; it reads YRPV. The disordered stretch occupies residues 713–740; the sequence is PSYTQQIPIRKDRGQPANEETEEGGGNN. Cys-771 carries S-palmitoyl cysteine; by host lipidation. Residues 851 to 852 carry the Di-leucine internalization motif motif; the sequence is LL.

In terms of assembly, the mature envelope protein (Env) consists of a homotrimer of non-covalently associated gp120-gp41 heterodimers. The resulting complex protrudes from the virus surface as a spike. There seems to be as few as 10 spikes on the average virion. Interacts with human CD4, CCR5 and CXCR4, to form a P4HB/PDI-CD4-CXCR4-gp120 complex. Gp120 also interacts with the C-type lectins CD209/DC-SIGN and CLEC4M/DC-SIGNR (collectively referred to as DC-SIGN(R)). Gp120 and gp41 interact with GalCer. As to quaternary structure, the mature envelope protein (Env) consists of a homotrimer of non-covalently associated gp120-gp41 heterodimers. The resulting complex protrudes from the virus surface as a spike. There seems to be as few as 10 spikes on the average virion. In terms of processing, specific enzymatic cleavages in vivo yield mature proteins. Envelope glycoproteins are synthesized as an inactive precursor that is heavily N-glycosylated and processed likely by host cell furin in the Golgi to yield the mature SU and TM proteins. The cleavage site between SU and TM requires the minimal sequence [KR]-X-[KR]-R. Palmitoylation of the transmembrane protein and of Env polyprotein (prior to its proteolytic cleavage) is essential for their association with host cell membrane lipid rafts. Palmitoylation is therefore required for envelope trafficking to classical lipid rafts, but not for viral replication.

It is found in the virion membrane. The protein resides in the host cell membrane. It localises to the host endosome membrane. Functionally, the surface protein gp120 (SU) attaches the virus to the host lymphoid cell by binding to the primary receptor CD4. This interaction induces a structural rearrangement creating a high affinity binding site for a chemokine coreceptor like CXCR4 and/or CCR5. This peculiar 2 stage receptor-interaction strategy allows gp120 to maintain the highly conserved coreceptor-binding site in a cryptic conformation, protected from neutralizing antibodies. Since CD4 also displays a binding site for the disulfide-isomerase P4HB/PDI, a P4HB/PDI-CD4-CXCR4-gp120 complex may form. In that complex, P4HB/PDI could reach and reduce gp120 disulfide bonds, causing major conformational changes in gp120. TXN, another PDI family member could also be involved in disulfide rearrangements in Env during fusion. These changes are transmitted to the transmembrane protein gp41 and are thought to activate its fusogenic potential by unmasking its fusion peptide. In terms of biological role, the surface protein gp120 is a ligand for CD209/DC-SIGN and CLEC4M/DC-SIGNR, which are respectively found on dendritic cells (DCs), and on endothelial cells of liver sinusoids and lymph node sinuses. These interactions allow capture of viral particles at mucosal surfaces by these cells and subsequent transmission to permissive cells. DCs are professional antigen presenting cells, critical for host immunity by inducing specific immune responses against a broad variety of pathogens. They act as sentinels in various tissues where they take up antigen, process it, and present it to T-cells following migration to lymphoid organs. HIV subverts the migration properties of dendritic cells to gain access to CD4+ T-cells in lymph nodes. Virus transmission to permissive T-cells occurs either in trans (without DCs infection, through viral capture and transmission), or in cis (following DCs productive infection, through the usual CD4-gp120 interaction), thereby inducing a robust infection. In trans infection, bound virions remain infectious over days and it is proposed that they are not degraded, but protected in non-lysosomal acidic organelles within the DCs close to the cell membrane thus contributing to the viral infectious potential during DCs' migration from the periphery to the lymphoid tissues. On arrival at lymphoid tissues, intact virions recycle back to DCs' cell surface allowing virus transmission to CD4+ T-cells. Virion capture also seems to lead to MHC-II-restricted viral antigen presentation, and probably to the activation of HIV-specific CD4+ cells. Its function is as follows. The transmembrane protein gp41 (TM) acts as a class I viral fusion protein. Under the current model, the protein has at least 3 conformational states: pre-fusion native state, pre-hairpin intermediate state, and post-fusion hairpin state. During fusion of viral and target intracellular membranes, the coiled coil regions (heptad repeats) assume a trimer-of-hairpins structure, positioning the fusion peptide in close proximity to the C-terminal region of the ectodomain. The formation of this structure appears to drive apposition and subsequent fusion of viral and target cell membranes. Complete fusion occurs in host cell endosomes and is dynamin-dependent, however some lipid transfer might occur at the plasma membrane. The virus undergoes clathrin-dependent internalization long before endosomal fusion, thus minimizing the surface exposure of conserved viral epitopes during fusion and reducing the efficacy of inhibitors targeting these epitopes. Membranes fusion leads to delivery of the nucleocapsid into the cytoplasm. The envelope glycoprotein gp160 precursor down-modulates cell surface CD4 antigen by interacting with it in the endoplasmic reticulum and blocking its transport to the cell surface. Functionally, the gp120-gp41 heterodimer seems to contribute to T-cell depletion during HIV-1 infection. The envelope glycoproteins expressed on the surface of infected cells induce apoptosis through an interaction with uninfected cells expressing the receptor (CD4) and the coreceptors CXCR4 or CCR5. This type of bystander killing may be obtained by at least three distinct mechanisms. First, the interaction between the 2 cells can induce cellular fusion followed by nuclear fusion within the syncytium. Syncytia are condemned to die from apoptosis. Second, the 2 interacting cells may not fuse entirely and simply exchange plasma membrane lipids, after a sort of hemifusion process, followed by rapid death. Third, it is possible that virus-infected cells, on the point of undergoing apoptosis, fuse with CD4-expressing cells, in which case apoptosis is rapidly transmitted from one cell to the other and thus occurs in a sort of contagious fashion. In terms of biological role, the gp120-gp41 heterodimer allows rapid transcytosis of the virus through CD4 negative cells such as simple epithelial monolayers of the intestinal, rectal and endocervical epithelial barriers. Both gp120 and gp41 specifically recognize glycosphingolipids galactosyl-ceramide (GalCer) or 3' sulfo-galactosyl-ceramide (GalS) present in the lipid rafts structures of epithelial cells. Binding to these alternative receptors allows the rapid transcytosis of the virus through the epithelial cells. This transcytotic vesicle-mediated transport of virions from the apical side to the basolateral side of the epithelial cells does not involve infection of the cells themselves. The protein is Envelope glycoprotein gp160 (env) of Human immunodeficiency virus type 2 subtype B (isolate EHO) (HIV-2).